A 2194-amino-acid polypeptide reads, in one-letter code: Glutamate synthase [NADH], amyloplastic (2194 aa).

Residues 1 to 101 (MSNSLSLTFT…LYDPAFDKDS (101 aa)) constitute an amyloplast transit peptide. Catalysis depends on Cys102, which acts as the Nucleophile. Positions 102 to 503 (CGVGFVAELN…PGMMLLVDFE (402 aa)) constitute a Glutamine amidotransferase type-2 domain. The interval 1021–1045 (GGKSNTGEGGEQPSRMEPLADGSRN) is disordered. 1193-1250 (LAETHQTLVANDLRGRTTLQTDGQLKTGRDVAIAALLGAEEYGFSTAPLITLGCIMMR) contacts FMN. Cys1246, Cys1252, and Cys1257 together coordinate [3Fe-4S] cluster. 1974 to 1988 (GGGDTGTDCIGTSIR) serves as a coordination point for NAD(+).

Belongs to the glutamate synthase family. In terms of assembly, monomer. [3Fe-4S] cluster serves as cofactor. The cofactor is FAD. FMN is required as a cofactor. In terms of tissue distribution, expressed in infected cells in root nodules. Barely detected in roots and stems.

Its subcellular location is the plastid. It localises to the amyloplast. The enzyme catalyses 2 L-glutamate + NAD(+) = L-glutamine + 2-oxoglutarate + NADH + H(+). It participates in amino-acid biosynthesis; L-glutamate biosynthesis via GLT pathway; L-glutamate from 2-oxoglutarate and L-glutamine (NAD(+) route): step 1/1. Its pathway is energy metabolism; nitrogen metabolism. Its activity is regulated as follows. Inhibited by malate, citrate, glutamate, NAD(+) and azaserine, but not by 2-2' dipyridil and N-ethylmaleimide. In terms of biological role, required for the assimilation of symbiotically fixed nitrogen into amino acids in root nodules. This chain is Glutamate synthase [NADH], amyloplastic, found in Medicago sativa (Alfalfa).